The primary structure comprises 307 residues: Fructose-bisphosphate aldolase (307 aa).

Residue serine 49 participates in D-glyceraldehyde 3-phosphate binding. Residue aspartate 82 is the Proton donor of the active site. Residues histidine 83, aspartate 104, glutamate 134, and histidine 180 each contribute to the Zn(2+) site. Residue glycine 181 coordinates dihydroxyacetone phosphate. Histidine 210 contacts Zn(2+). Dihydroxyacetone phosphate is bound by residues glycine 211 to serine 213 and asparagine 253 to threonine 256.

It belongs to the class II fructose-bisphosphate aldolase family. In terms of assembly, homodimer. Requires Zn(2+) as cofactor.

It carries out the reaction beta-D-fructose 1,6-bisphosphate = D-glyceraldehyde 3-phosphate + dihydroxyacetone phosphate. It functions in the pathway carbohydrate degradation; glycolysis; D-glyceraldehyde 3-phosphate and glycerone phosphate from D-glucose: step 4/4. Catalyzes the aldol condensation of dihydroxyacetone phosphate (DHAP or glycerone-phosphate) with glyceraldehyde 3-phosphate (G3P) to form fructose 1,6-bisphosphate (FBP) in gluconeogenesis and the reverse reaction in glycolysis. In Helicobacter pylori (strain ATCC 700392 / 26695) (Campylobacter pylori), this protein is Fructose-bisphosphate aldolase (fba).